The chain runs to 536 residues: Lysosomal acid glucosylceramidase (536 aa).

Residues methionine 1–glycine 39 form the signal peptide. Cystine bridges form between cysteine 43–cysteine 55 and cysteine 57–cysteine 62. 3 N-linked (GlcNAc...) asparagine glycosylation sites follow: asparagine 58, asparagine 98, and asparagine 185. Glutamate 274 acts as the Proton donor in catalysis. Asparagine 309 carries an N-linked (GlcNAc...) asparagine glycan. The Nucleophile role is filled by glutamate 379. Asparagine 501 carries N-linked (GlcNAc...) asparagine glycosylation.

Belongs to the glycosyl hydrolase 30 family. As to quaternary structure, interacts with saposin-C. Interacts with SCARB2. Interacts with TCP1. Interacts with GRN; this interaction prevents aggregation of GBA1-SCARB2 complex via interaction with HSPA1A upon stress.

It is found in the lysosome membrane. It carries out the reaction a beta-D-glucosyl-(1&lt;-&gt;1')-N-acylsphing-4-enine + H2O = an N-acylsphing-4-enine + D-glucose. The enzyme catalyses a beta-D-galactosyl-(1&lt;-&gt;1')-N-acylsphing-4-enine + H2O = an N-acylsphing-4-enine + D-galactose. The catalysed reaction is cholesteryl 3-beta-D-glucoside + H2O = cholesterol + D-glucose. It catalyses the reaction a beta-D-glucosyl-(1&lt;-&gt;1')-N-acylsphing-4-enine + cholesterol = cholesteryl 3-beta-D-glucoside + an N-acylsphing-4-enine. It carries out the reaction beta-D-glucosyl-N-(9Z-octadecenoyl)-sphing-4E-enine + cholesterol = N-(9Z-octadecenoyl)-sphing-4-enine + cholesteryl 3-beta-D-glucoside. The enzyme catalyses beta-D-glucosyl-N-octanoylsphing-4E-enine + cholesterol = N-octanoylsphing-4-enine + cholesteryl 3-beta-D-glucoside. The catalysed reaction is beta-D-glucosyl-N-dodecanoylsphing-4-enine + cholesterol = N-dodecanoylsphing-4-enine + cholesteryl 3-beta-D-glucoside. It catalyses the reaction beta-D-glucosyl-(1&lt;-&gt;1)-N-octadecanoylsphing-4-enine + cholesterol = N-octadecanoylsphing-4-enine + cholesteryl 3-beta-D-glucoside. It carries out the reaction beta-D-glucosyl-(1&lt;-&gt;1')-N-(15Z-tetracosenoyl)-sphing-4-enine + cholesterol = N-(15Z-tetracosenoyl)-sphing-4-enine + cholesteryl 3-beta-D-glucoside. The enzyme catalyses a beta-D-galactosyl-(1&lt;-&gt;1')-N-acylsphing-4-enine + cholesterol = cholesteryl 3-beta-D-galactoside + an N-acylsphing-4-enine. The catalysed reaction is 1-(beta-D-galactosyl)-N-dodecanoylsphing-4-enine + cholesterol = cholesteryl 3-beta-D-galactoside + N-dodecanoylsphing-4-enine. It catalyses the reaction a beta-D-xylosyl-(1&lt;-&gt;1')-N-acylsphing-4-enine + cholesterol = cholesteryl 3-beta-D-xyloside + an N-acylsphing-4-enine. It carries out the reaction beta-D-xylosyl-(1&lt;-&gt;1')-N-(9Z-octadecenoyl)-sphing-4-enine + cholesterol = cholesteryl 3-beta-D-xyloside + N-(9Z-octadecenoyl)-sphing-4-enine. Its pathway is steroid metabolism; cholesterol metabolism. The protein operates within sphingolipid metabolism. Its function is as follows. Glucosylceramidase that catalyzes, within the lysosomal compartment, the hydrolysis of glucosylceramides/GlcCers (such as beta-D-glucosyl-(1&lt;-&gt;1')-N-acylsphing-4-enine) into free ceramides (such as N-acylsphing-4-enine) and glucose. Plays a central role in the degradation of complex lipids and the turnover of cellular membranes. Through the production of ceramides, participates in the PKC-activated salvage pathway of ceramide formation. Catalyzes the glucosylation of cholesterol, through a transglucosylation reaction where glucose is transferred from GlcCer to cholesterol. GlcCer containing mono-unsaturated fatty acids (such as beta-D-glucosyl-N-(9Z-octadecenoyl)-sphing-4-enine) are preferred as glucose donors for cholesterol glucosylation when compared with GlcCer containing same chain length of saturated fatty acids (such as beta-D-glucosyl-N-octadecanoyl-sphing-4-enine). Under specific conditions, may alternatively catalyze the reverse reaction, transferring glucose from cholesteryl 3-beta-D-glucoside to ceramide. Can also hydrolyze cholesteryl 3-beta-D-glucoside producing glucose and cholesterol. Catalyzes the hydrolysis of galactosylceramides/GalCers (such as beta-D-galactosyl-(1&lt;-&gt;1')-N-acylsphing-4-enine), as well as the transfer of galactose between GalCers and cholesterol in vitro, but with lower activity than with GlcCers. Contrary to GlcCer and GalCer, xylosylceramide/XylCer (such as beta-D-xyosyl-(1&lt;-&gt;1')-N-acylsphing-4-enine) is not a good substrate for hydrolysis, however it is a good xylose donor for transxylosylation activity to form cholesteryl 3-beta-D-xyloside. The chain is Lysosomal acid glucosylceramidase (GBA1) from Pongo abelii (Sumatran orangutan).